A 210-amino-acid polypeptide reads, in one-letter code: Large ribosomal subunit protein uL4 (210 aa).

Positions 56–80 are disordered; sequence FVSGGGKKPWRQKGTGRARAGSTRS.

This sequence belongs to the universal ribosomal protein uL4 family. Part of the 50S ribosomal subunit.

In terms of biological role, one of the primary rRNA binding proteins, this protein initially binds near the 5'-end of the 23S rRNA. It is important during the early stages of 50S assembly. It makes multiple contacts with different domains of the 23S rRNA in the assembled 50S subunit and ribosome. Functionally, forms part of the polypeptide exit tunnel. This is Large ribosomal subunit protein uL4 from Solidesulfovibrio magneticus (strain ATCC 700980 / DSM 13731 / RS-1) (Desulfovibrio magneticus).